Consider the following 468-residue polypeptide: UDP-N-acetylmuramoylalanine--D-glutamate ligase (468 aa).

Position 127 to 133 (127 to 133 (GTNGKTT)) interacts with ATP.

Belongs to the MurCDEF family.

It localises to the cytoplasm. The enzyme catalyses UDP-N-acetyl-alpha-D-muramoyl-L-alanine + D-glutamate + ATP = UDP-N-acetyl-alpha-D-muramoyl-L-alanyl-D-glutamate + ADP + phosphate + H(+). The protein operates within cell wall biogenesis; peptidoglycan biosynthesis. Cell wall formation. Catalyzes the addition of glutamate to the nucleotide precursor UDP-N-acetylmuramoyl-L-alanine (UMA). The protein is UDP-N-acetylmuramoylalanine--D-glutamate ligase of Prochlorococcus marinus (strain MIT 9312).